We begin with the raw amino-acid sequence, 172 residues long: Biogenesis of lysosome-related organelles complex 1 subunit 6 (172 aa).

Disordered stretches follow at residues 1–36 (MSVP…SPDE) and 135–172 (RALK…AKRM). Residues 63 to 167 (DLQRSKQALQ…FEREKQLTAR (105 aa)) are a coiled coil. Basic and acidic residues predominate over residues 143-164 (RQKEELEREQQREKEFEREKQL).

This sequence belongs to the BLOC1S6 family. In terms of assembly, interacts with BLOC1S4 and DTNBP1/BLOC1S7. Homodimer. Component of the biogenesis of lysosome-related organelles complex 1 (BLOC-1) composed of BLOC1S1, BLOC1S2, BLOC1S3, BLOC1S4, BLOC1S5, BLOC1S6, DTNBP1/BLOC1S7 and SNAPIN/BLOC1S8. Octamer composed of one copy each BLOC1S1, BLOC1S2, BLOC1S3, BLOC1S4, BLOC1S5, BLOC1S6, DTNBP1/BLOC1S7 and SNAPIN/BLOC1S8. The BLOC-1 complex associates with the AP-3 protein complex and membrane protein cargos. Interacts with BLOC1S5, F-actin, SNAP25 isoform 1 and isoform 2, SNAP47 and STX12. Phosphorylated. As to expression, widely expressed.

The protein resides in the cytoplasm. It localises to the membrane. In terms of biological role, component of the BLOC-1 complex, a complex that is required for normal biogenesis of lysosome-related organelles (LRO), such as platelet dense granules and melanosomes. In concert with the AP-3 complex, the BLOC-1 complex is required to target membrane protein cargos into vesicles assembled at cell bodies for delivery into neurites and nerve terminals. The BLOC-1 complex, in association with SNARE proteins, is also proposed to be involved in neurite extension. May play a role in intracellular vesicle trafficking, particularly in the vesicle-docking and fusion process. This Homo sapiens (Human) protein is Biogenesis of lysosome-related organelles complex 1 subunit 6 (BLOC1S6).